The chain runs to 417 residues: MAEIKNYTLNFGPQHPAAHGVLRLVLELDGEVIQRADPHIGLLHRATEKLAETKTFIQSVPYMDRLDYVSMMVNEHGYVMAIEKLLGIDVPVRAQYIRVMFDEITRVLNHLMWIGAHALDVGAMAVFLYAFREREDLMDVYEAVSGARMHAAYYRPGGVYRDLPDAMPQYKASKIRNAKALSKMNENRQGSLLDFIDDFFTRFPKCVDEYETLLTDNRIWKQRLVGIGVVSPERALNLGMTGAMLRGSGIEWDLRKKQPYEVYDKLDFDIPVGVNGDCYDRYLVRVEEMRQSTRIVKQCVEWLRKNPGPVMIDNHKVAPPSRVGMKSNMEELIHHFKLFTEGFHVPEGEAYAAVEHPKGEFGIYLISDGANKPYRLKIRAPGYAHLSTLDEMARGHMIADAVTIIGTQDIVFGEVDR.

This sequence belongs to the complex I 49 kDa subunit family. NDH-1 is composed of 14 different subunits. Subunits NuoB, C, D, E, F, and G constitute the peripheral sector of the complex.

It localises to the cell inner membrane. The enzyme catalyses a quinone + NADH + 5 H(+)(in) = a quinol + NAD(+) + 4 H(+)(out). NDH-1 shuttles electrons from NADH, via FMN and iron-sulfur (Fe-S) centers, to quinones in the respiratory chain. The immediate electron acceptor for the enzyme in this species is believed to be ubiquinone. Couples the redox reaction to proton translocation (for every two electrons transferred, four hydrogen ions are translocated across the cytoplasmic membrane), and thus conserves the redox energy in a proton gradient. The polypeptide is NADH-quinone oxidoreductase subunit D (Paraburkholderia xenovorans (strain LB400)).